We begin with the raw amino-acid sequence, 129 residues long: Small ribosomal subunit protein uS11 (129 aa).

It belongs to the universal ribosomal protein uS11 family. As to quaternary structure, part of the 30S ribosomal subunit. Interacts with proteins S7 and S18. Binds to IF-3.

Located on the platform of the 30S subunit, it bridges several disparate RNA helices of the 16S rRNA. Forms part of the Shine-Dalgarno cleft in the 70S ribosome. The polypeptide is Small ribosomal subunit protein uS11 (Geobacillus thermodenitrificans (strain NG80-2)).